The sequence spans 1251 residues: MGQSKRPFKNKEEKKSRGFGRSRHDDAGAGGRPQVKKAVFESTKKKEIGVSDLTLLSKVSNEAINENLKKRFEHGEIYTYIGHVLVSVNPFRDLGIYTDKVLESYRGKNRLEVPPHVFAVAEAGYYNMKAYKENQCVIISGESGAGKTEAAKRLMQYIANVSGGTDSSIQQTKDMVLATNPLLESFGNAKTLRNNNSSRFGKYLELQFNSVGEPVGATITNYLLEKSRVVGQIKNERNFHIFYQFTKAAPQSYRDAFGIQQPQSYVYTSRSQCFDVAGMNDAADFNETIEAMRIIGLRQAEQDNIFRVLSAILWLGNMQFQEDDHSNASINDQSIIDFVAYLLEVDAEGVQKALTQRIVETARGGRRGSIYEVPLNTVQATAVRDALAKALYFNLFDWIVQRVNASLTAKGTVTNTIGILDIYGFEIFERNSFEQLCINYVNEKLQQIFIQLTLKTEQEEYAREQIKWTPIKYFDNKVVCQLIEDKRPPGVFAALNDACATAHADSGAADQTFVGRLNFLSQNPNFESRQGQFIVKHYAGDVAYAVEGMTDKNKDQLLKDLLNLVNSSTNSFLHTLFPNRVNQDDKRRPPTAGDKIKASANDLVTTLAKAQPSYIRTIKPNDNKSPSEYNVANVIHQIKYLGLQENVRIRRAGFAYRQTFEKFVERFYLLSPKTSYAGEYTWTGDAESGARQILKDTSIPPEEYQMGVAKAFIKTPETLFALEHMRDRYWHNMATRIQRAWRNYLRYRTECAIRIQRFWRRVTGGLEFIKLRDQGHKILGGRKERRRYSLVGSRRFLGDYLGISNAGDMGDVIKSSINISSGENILYSCRCELLVTKFGRSSKPSPRLLILTSRNVYVVVQKFVNNQLSILAERMIPIGAIKFVSTSNLKDDWFSIGVGAQQEPDPLISCVFKTEFFTYLTNALRGQLNLRIGETIEYNKKPGKLAVVKAVKDPAVPRDDVYKSGTIRTGPGEPANSVSKPTPRPKQVPGKPITKGKLLRPGGPGGGPSKLAPRPKPVAQNLPENPRAAKQPAGEKFKPVAQSVTAVAAAHARTNSGSQNRPPPPPPPTQPPAPKKDTAKALYDFDSGRSNELPLRKGEIVQVVTKESNGWWLCMNLETSAQGWAPEAYLEPIVAKTPSLPPPPPSLPPQSKSAVSNTLPNGPSRVNGAAAKAKPAPPAPPFKRPDINRKAAPAAAPRDSAVSMNSHESPAGSGRATPSSLSNASIAGGLAEALRARQSAMQGKEQDDDDW.

The interval 1–37 (MGQSKRPFKNKEEKKSRGFGRSRHDDAGAGGRPQVKK) is disordered. Positions 9 to 27 (KNKEEKKSRGFGRSRHDDA) are enriched in basic and acidic residues. Residues 48–727 (IGVSDLTLLS…TLFALEHMRD (680 aa)) form the Myosin motor domain. 141–148 (GESGAGKT) contributes to the ATP binding site. Residue serine 369 is modified to Phosphoserine. The actin-binding stretch occupies residues 416 to 498 (TIGILDIYGF…PGVFAALNDA (83 aa)). 2 consecutive IQ domains span residues 731–751 (HNMA…RTEC) and 752–777 (AIRI…QGHK). The TH1 domain maps to 785-980 (RRRYSLVGSR…PGEPANSVSK (196 aa)). 2 disordered regions span residues 958-1093 (RDDV…SNEL) and 1135-1227 (AKTP…ASIA). A compositionally biased stretch (low complexity) spans 1040–1052 (VAQSVTAVAAAHA). Residues 1061-1073 (RPPPPPPPTQPPA) are compositionally biased toward pro residues. In terms of domain architecture, SH3 spans 1074 to 1135 (PKKDTAKALY…PEAYLEPIVA (62 aa)). Pro residues predominate over residues 1139 to 1148 (SLPPPPPSLP). 2 stretches are compositionally biased toward polar residues: residues 1150 to 1161 (QSKSAVSNTLPN) and 1216 to 1225 (ATPSSLSNAS).

This sequence belongs to the TRAFAC class myosin-kinesin ATPase superfamily. Myosin family. Phosphorylation of the TEDS site (Ser-369) is required for the polarization of the actin cytoskeleton. Phosphorylation probably activates the myosin-I ATPase activity.

Its subcellular location is the cytoplasm. The protein resides in the cytoskeleton. It is found in the actin patch. Functionally, type-I myosin implicated in the organization of the actin cytoskeleton. Required for proper actin cytoskeleton polarization. At the cell cortex, assembles in patch-like structures together with proteins from the actin-polymerizing machinery and promotes actin assembly. Functions as actin nucleation-promoting factor (NPF) for the Arp2/3 complex. This is Myosin-1 (MYO1) from Coccidioides immitis (strain RS) (Valley fever fungus).